We begin with the raw amino-acid sequence, 1700 residues long: Balbiani ring protein 3 (1700 aa).

Residues 1–20 (MKTLSSLLLVLAVNVLLIQA) form the signal peptide.

Salivary gland.

Its subcellular location is the secreted. In terms of biological role, used by the larvae to construct a supramolecular structure, the larval tube. Balbiani ring protein 3 could play a role as a transport protein that binds to other proteins intracellularly and in the gland lumen in order to prevent these from forming water-insoluble fibers too early. In Chironomus tentans (Midge), this protein is Balbiani ring protein 3 (BR3).